We begin with the raw amino-acid sequence, 425 residues long: Cyclin-K (425 aa).

Residues 262 to 425 form a disordered region; that stretch reads GKQPIPQQPP…RRYLDDDRNL (164 aa). Positions 366–377 are enriched in low complexity; that stretch reads AEPAAASELDPA. Positions 379 to 399 are enriched in pro residues; that stretch reads GPAPPLPHGAPPPLPHRPPPT.

It belongs to the cyclin family.

The protein localises to the nucleus. Functionally, regulatory subunit of cyclin-dependent kinases that mediates activation of target kinases. Plays a role in transcriptional regulation via its role in regulating the phosphorylation of the C-terminal domain (CTD) of the large subunit of RNA polymerase II (POLR2A). This is Cyclin-K (ccnk) from Danio rerio (Zebrafish).